Reading from the N-terminus, the 1977-residue chain is MSESEGGKDTTPEPSPANGAGPGPEWGLCPGPPAVEGESSGASGLGTPKRRNQHSKHKTVAVASAQRSPRALFCLTLANPLRRSCISIVEWKPFDILILLTIFANCVALGVYIPFPEDDSNTANHNLEQVEYVFLVIFTVETVLKIVAYGLVLHPSAYIRNGWNLLDFIIVVVGLFSVLLEQGPGRPGDAPHTGGKPGGFDVKALRAFRVLRPLRLVSGVPSLHIVLNSIMKALVPLLHIALLVLFVIIIYAIIGLELFLGRMHKTCYFLGSDMEAEEDPSPCASSGSGRACTLNQTECRGRWPGPNGGITNFDNFFFAMLTVFQCVTMEGWTDVLYWMQDAMGYELPWVYFVSLVIFGSFFVLNLVLGVLSGEFSKEREKAKARGDFQKQREKQQMEEDLRGYLDWITQAEELDMEDPSADDNLGSMAEEGRAGHRPQLAELTNRRRGRLRWFSHSTRSTHSTSSHASLPASDTGSMTETQGDEDEEEGALASCTRCLNKIMKTRVCRRLRRANRVLRARCRRAVKSNACYWAVLLLVFLNTLTIASEHHGQPVWLTQIQEYANKVLLCLFTVEMLLKLYGLGPSAYVSSFFNRFDCFVVCGGILETTLVEVGAMQPLGISVLRCVRLLRIFKVTRHWASLSNLVASLLNSMKSIASLLLLLFLFIIIFSLLGMQLFGGKFNFDQTHTKRSTFDTFPQALLTVFQILTGEDWNVVMYDGIMAYGGPFFPGMLVCIYFIILFICGNYILLNVFLAIAVDNLASGDAGTAKDKGGEKSNEKDLPQENEGLVPGVEKEEEEGARREGADMEEEEEEEEEEEEEEEEEGAGGVELLQEVVPKEKVVPIPEGSAFFCLSQTNPLRKGCHTLIHHHVFTNLILVFIILSSVSLAAEDPIRAHSFRNHILGYFDYAFTSIFTVEILLKMTVFGAFLHRGSFCRSWFNMLDLLVVSVSLISFGIHSSAISVVKILRVLRVLRPLRAINRAKGLKHVVQCVFVAIRTIGNIMIVTTLLQFMFACIGVQLFKGKFYTCTDEAKHTPQECKGSFLVYPDGDVSRPLVRERLWVNSDFNFDNVLSAMMALFTVSTFEGWPALLYKAIDAYAEDHGPIYNYRVEISVFFIVYIIIIAFFMMNIFVGFVIITFRAQGEQEYQNCELDKNQRQCVEYALKAQPLRRYIPKNPHQYRVWATVNSAAFEYLMFLLILLNTVALAMQHYEQTAPFNYAMDILNMVFTGLFTIEMVLKIIAFKPKHYFTDAWNTFDALIVVGSIVDIAVTEVNNGGHLGESSEDSSRISITFFRLFRVMRLVKLLSKGEGIRTLLWTFIKSFQALPYVALLIAMIFFIYAVIGMQMFGKVALQDGTQINRNNNFQTFPQAVLLLFRCATGEAWQEIMLASLPGNRCDPESDFGPGEEFTCGSNFAIAYFISFFMLCAFLIINLFVAVIMDNFDYLTRDWSILGPHHLDEFKRIWSEYDPGAKGRIKHLDVVALLRRIQPPLGFGKLCPHRVACKRLVAMNMPLNSDGTVTFNATLFALVRTSLKIKTEGNLEQANQELRIVIKKIWKRMKQKLLDEVIPPPDEEEVTVGKFYATFLIQDYFRKFRRRKEKGLLGNDAAPSTSSALQAGLRSLQDLGPEMRQALTCDTEEEEEEGQEGVEEEDEKDLETNKATMVSQPSARRGSGISVSLPVGDRLPDSLSFGPSDDDRGTPTSSQPSVPQAGSNTHRRGSGALIFTIPEEGNSQPKGTKGQNKQDEDEEVPDRLSYLDEQAGTPPCSVLLPPHRAQRYMDGHLVPRRRLLPPTPAGRKPSFTIQCLQRQGSCEDLPIPGTYHRGRNSGPNRAQGSWATPPQRGRLLYAPLLLVEEGAAGEGYLGRSSGPLRTFTCLHVPGTHSDPSHGKRGSADSLVEAVLISEGLGLFARDPRFVALAKQEIADACRLTLDEMDNAASDLLAQGTSSLYSDEESILSRFDEEDLGDEMACVHAL.

A compositionally biased stretch (basic and acidic residues) spans 1–11 (MSESEGGKDTT). A disordered region spans residues 1-60 (MSESEGGKDTTPEPSPANGAGPGPEWGLCPGPPAVEGESSGASGLGTPKRRNQHSKHKTV). The Cytoplasmic portion of the chain corresponds to 1–92 (MSESEGGKDT…RSCISIVEWK (92 aa)). The span at 48–59 (PKRRNQHSKHKT) shows a compositional bias: basic residues. An I repeat occupies 79-375 (NPLRRSCISI…LVLGVLSGEF (297 aa)). A helical transmembrane segment spans residues 93–111 (PFDILILLTIFANCVALGV). At 112–129 (YIPFPEDDSNTANHNLEQ) the chain is on the extracellular side. The helical transmembrane segment at 130–149 (VEYVFLVIFTVETVLKIVAY) threads the bilayer. Residues 150-161 (GLVLHPSAYIRN) are Cytoplasmic-facing. A helical transmembrane segment spans residues 162–180 (GWNLLDFIIVVVGLFSVLL). Residues 181–201 (EQGPGRPGDAPHTGGKPGGFD) lie on the Extracellular side of the membrane. Residues 202–220 (VKALRAFRVLRPLRLVSGV) form a helical membrane-spanning segment. The Cytoplasmic segment spans residues 221–239 (PSLHIVLNSIMKALVPLLH). Residues 240 to 259 (IALLVLFVIIIYAIIGLELF) form a helical membrane-spanning segment. At 260-347 (LGRMHKTCYF…WMQDAMGYEL (88 aa)) the chain is on the extracellular side. N-linked (GlcNAc...) asparagine glycosylation occurs at asparagine 295. Glutamate 330 provides a ligand contact to Ca(2+). The helical transmembrane segment at 348–372 (PWVYFVSLVIFGSFFVLNLVLGVLS) threads the bilayer. Topologically, residues 373–529 (GEFSKEREKA…ARCRRAVKSN (157 aa)) are cytoplasmic. The tract at residues 395–412 (QQMEEDLRGYLDWITQAE) is binding to the beta subunit. Disordered stretches follow at residues 418–441 (DPSA…PQLA) and 455–488 (SHST…EDEE). A compositionally biased stretch (low complexity) spans 455-469 (SHSTRSTHSTSSHAS). An II repeat occupies 515-761 (NRVLRARCRR…VFLAIAVDNL (247 aa)). Residues 530-549 (ACYWAVLLLVFLNTLTIASE) traverse the membrane as a helical segment. Topologically, residues 550–564 (HHGQPVWLTQIQEYA) are extracellular. Residues 565 to 583 (NKVLLCLFTVEMLLKLYGL) traverse the membrane as a helical segment. Residues 584–591 (GPSAYVSS) lie on the Cytoplasmic side of the membrane. The helical transmembrane segment at 592–610 (FFNRFDCFVVCGGILETTL) threads the bilayer. Residues 611–620 (VEVGAMQPLG) lie on the Extracellular side of the membrane. A helical membrane pass occupies residues 621 to 639 (ISVLRCVRLLRIFKVTRHW). The Cytoplasmic segment spans residues 640 to 658 (ASLSNLVASLLNSMKSIAS). The helical transmembrane segment at 659-679 (LLLLLFLFIIIFSLLGMQLFG) threads the bilayer. Residues 680–733 (GKFNFDQTHTKRSTFDTFPQALLTVFQILTGEDWNVVMYDGIMAYGGPFFPGML) lie on the Extracellular side of the membrane. Position 711 (glutamate 711) interacts with Ca(2+). A helical transmembrane segment spans residues 734-758 (VCIYFIILFICGNYILLNVFLAIAV). Topologically, residues 759–871 (DNLASGDAGT…KGCHTLIHHH (113 aa)) are cytoplasmic. Residues 767 to 830 (GTAKDKGGEK…EEEEEGAGGV (64 aa)) form a disordered region. Residues 768–783 (TAKDKGGEKSNEKDLP) show a composition bias toward basic and acidic residues. Over residues 807–826 (DMEEEEEEEEEEEEEEEEEG) the composition is skewed to acidic residues. The III repeat unit spans residues 858–1140 (NPLRKGCHTL…IFVGFVIITF (283 aa)). A helical transmembrane segment spans residues 872–890 (VFTNLILVFIILSSVSLAA). Residues 891–906 (EDPIRAHSFRNHILGY) are Extracellular-facing. A helical transmembrane segment spans residues 907 to 926 (FDYAFTSIFTVEILLKMTVF). Residues 927–938 (GAFLHRGSFCRS) lie on the Cytoplasmic side of the membrane. The helical transmembrane segment at 939–957 (WFNMLDLLVVSVSLISFGI) threads the bilayer. At 958–963 (HSSAIS) the chain is on the extracellular side. The helical transmembrane segment at 964–983 (VVKILRVLRVLRPLRAINRA) threads the bilayer. Residues 984-1002 (KGLKHVVQCVFVAIRTIGN) lie on the Cytoplasmic side of the membrane. Residues 1003–1022 (IMIVTTLLQFMFACIGVQLF) form a helical membrane-spanning segment. The Extracellular portion of the chain corresponds to 1023–1112 (KGKFYTCTDE…HGPIYNYRVE (90 aa)). A dihydropyridine binding region spans residues 1060 to 1150 (RLWVNSDFNF…RAQGEQEYQN (91 aa)). Glutamate 1086 serves as a coordination point for Ca(2+). A helical transmembrane segment spans residues 1113 to 1133 (ISVFFIVYIIIIAFFMMNIFV). The Cytoplasmic segment spans residues 1134–1190 (GFVIITFRAQGEQEYQNCELDKNQRQCVEYALKAQPLRRYIPKNPHQYRVWATVNSA). The stretch at 1177–1444 (NPHQYRVWAT…LFVAVIMDNF (268 aa)) is one IV repeat. The helical transmembrane segment at 1191-1209 (AFEYLMFLLILLNTVALAM) threads the bilayer. The Extracellular portion of the chain corresponds to 1210 to 1224 (QHYEQTAPFNYAMDI). A helical transmembrane segment spans residues 1225–1244 (LNMVFTGLFTIEMVLKIIAF). Over 1245–1251 (KPKHYFT) the chain is Cytoplasmic. The helical transmembrane segment at 1252-1273 (DAWNTFDALIVVGSIVDIAVTE) threads the bilayer. At 1274–1290 (VNNGGHLGESSEDSSRI) the chain is on the extracellular side. The chain crosses the membrane as a helical span at residues 1291 to 1310 (SITFFRLFRVMRLVKLLSKG). The Cytoplasmic segment spans residues 1311–1329 (EGIRTLLWTFIKSFQALPY). The helical transmembrane segment at 1330–1349 (VALLIAMIFFIYAVIGMQMF) threads the bilayer. Topologically, residues 1350 to 1416 (GKVALQDGTQ…GEEFTCGSNF (67 aa)) are extracellular. The dihydropyridine binding stretch occupies residues 1397–1463 (RCDPESDFGP…LGPHHLDEFK (67 aa)). A phenylalkylamine binding region spans residues 1409–1452 (EFTCGSNFAIAYFISFFMLCAFLIINLFVAVIMDNFDYLTRDWS). Residues 1417–1441 (AIAYFISFFMLCAFLIINLFVAVIM) traverse the membrane as a helical segment. Topologically, residues 1442 to 1977 (DNFDYLTRDW…GDEMACVHAL (536 aa)) are cytoplasmic. Disordered regions lie at residues 1637-1754 (CDTE…EVPD) and 1816-1841 (DLPI…WATP). Positions 1638–1657 (DTEEEEEEGQEGVEEEDEKD) are enriched in acidic residues. Composition is skewed to polar residues over residues 1661-1670 (NKATMVSQPS), 1702-1716 (TPTS…AGSN), 1733-1743 (GNSQPKGTKGQ), and 1829-1840 (SGPNRAQGSWAT).

Belongs to the calcium channel alpha-1 subunit (TC 1.A.1.11) family. CACNA1F subfamily. In terms of assembly, voltage-dependent calcium channels are multisubunit complexes, consisting of alpha-1, alpha-2, beta and delta subunits in a 1:1:1:1 ratio. The channel activity is directed by the pore-forming and voltage-sensitive alpha-1 subunit. In many cases, this subunit is sufficient to generate voltage-sensitive calcium channel activity. The auxiliary subunits beta and alpha-2/delta linked by a disulfide bridge regulate the channel activity. Interacts (via IQ domain) with CABP4; in a calcium independent manner. As to quaternary structure, interacts with CABP4; suppresses robust calcium-dependent inactivation of channel without enhancing the hyperpolarized voltage-dependent activation. As to expression, expression in skeletal muscle and retina. Isoform 4 is expressed in retina.

It localises to the membrane. The catalysed reaction is Ca(2+)(in) = Ca(2+)(out). Its function is as follows. Voltage-sensitive calcium channels (VSCC) mediate the entry of calcium ions into excitable cells and are also involved in a variety of calcium-dependent processes, including muscle contraction, hormone or neurotransmitter release, gene expression, cell motility, cell division and cell death. The isoform alpha-1F gives rise to L-type calcium currents. Long-lasting (L-type) calcium channels belong to the 'high-voltage activated' (HVA) group. They are blocked by dihydropyridines (DHP), phenylalkylamines, and by benzothiazepines. Activates at more negative voltages and does not undergo calcium-dependent inactivation (CDI), due to incoming calcium ions, during depolarization. Functionally, voltage-dependent L-type calcium channel activates at more hyperpolarized voltages and exhibits a robust calcium-dependent inactivation (CDI), due to incoming calcium ions, during depolarizations. In terms of biological role, voltage-sensitive calcium channels (VSCC) mediate the entry of calcium ions into excitable cells and are also involved in a variety of calcium-dependent processes, including muscle contraction, hormone or neurotransmitter release, gene expression, cell motility, cell division and cell death. The sequence is that of Voltage-dependent L-type calcium channel subunit alpha-1F from Homo sapiens (Human).